Here is a 212-residue protein sequence, read N- to C-terminus: Uracil phosphoribosyltransferase (212 aa).

5-phospho-alpha-D-ribose 1-diphosphate-binding positions include arginine 78, arginine 103, and 130–138 (DPMLATGGS). Uracil is bound by residues isoleucine 193 and 198 to 200 (GDA). Aspartate 199 provides a ligand contact to 5-phospho-alpha-D-ribose 1-diphosphate.

This sequence belongs to the UPRTase family. The cofactor is Mg(2+).

It carries out the reaction UMP + diphosphate = 5-phospho-alpha-D-ribose 1-diphosphate + uracil. Its pathway is pyrimidine metabolism; UMP biosynthesis via salvage pathway; UMP from uracil: step 1/1. With respect to regulation, allosterically activated by GTP. In terms of biological role, catalyzes the conversion of uracil and 5-phospho-alpha-D-ribose 1-diphosphate (PRPP) to UMP and diphosphate. The polypeptide is Uracil phosphoribosyltransferase (Pseudomonas paraeruginosa (strain DSM 24068 / PA7) (Pseudomonas aeruginosa (strain PA7))).